A 117-amino-acid chain; its full sequence is Large ribosomal subunit protein bL20 (117 aa).

The protein belongs to the bacterial ribosomal protein bL20 family.

Binds directly to 23S ribosomal RNA and is necessary for the in vitro assembly process of the 50S ribosomal subunit. It is not involved in the protein synthesizing functions of that subunit. This Finegoldia magna (strain ATCC 29328 / DSM 20472 / WAL 2508) (Peptostreptococcus magnus) protein is Large ribosomal subunit protein bL20.